The sequence spans 1065 residues: MPKRRDIETILVIGSGPIVIGQAAEFDYAGTQACLALKEEGYKVILVNSNPATIMTDTEIADKVYMEPLTLDFVARIIRKERPDAILPTLGGQTGLNLAVELAKAGVLEECGVEILGTKLEAIEKAEDREQFRALMNELGEPVPESAIIHSLEEAYAFVEQIGYPVIVRPAFTLGGTGGGICTNEEELVEIVSTGLKLSPVHQCLLERSIAGYKEIEYEVMRDANDNAIVVCNMENIDPVGIHTGDSIVVAPSQTLSDREYQLLRNASLKIIRALGIEGGCNVQLALDPDSFRYYVIEVNPRVSRSSALASKATGYPIAKLAAKIAVGLTLDEMINPVTGKTYACFEPALDYVVTKIPRFPFDKFESANRRLGTQMKATGEVMAIGRTFEESLLKAVRSLEIGVHHLELNEAKTAADDVMEKRIRKAGDERLFYIAEALRRGVTVETLHEWSQIDRFFLHKIQNIIEMETVLKNHPGDLDVLKKAKGLGFSDAAIAALWNKTERDIYAVRRQRGIMPVYKMVDTCAAEFTSETPYYYSTYEEENESIVTEKPSVIVLGSGPIRIGQGIEFDYATVHCVWAIKQAGYEAIIINNNPETVSTDFSTSDKLYFEPLTAEDVMHVIDLEQPIGVIVQFGGQTAINLAAELEARGVRLLGTTLEDLDRAEDRDKFEQALSELGIPKPAGKTAVSVEEAVAIAEEIGYPVLVRPSYVLGGRAMEIVYNRGELLHYMEHAVRVNPQHPVLVDRYITGKEVEVDAIADGETVVIPGIMEHIERAGVHSGDSIAVYPPQTLSAEVIDKIADYTIRLARGLHIVGLLNIQFVVSGSDVYVLEVNPRSSRTVPFLSKITGVPMANLATKAILGTKLAEMGYETGVCPVRPGVYVKVPVFSFAKLRNVDISLGPEMKSTGEVIGKDVTFEKALYKGLVASGIHIQPHGAVLLTVADKDKEEAVELARRFADIGYQLLATNGTAETLKAAGIPVTVVNKIHSASPNILDVIRQGKAQVVINTLTKGKQPESDGFRIRREAVENGIPCLTSLDTARAMLQVLESMTFSTTAMTEGLVRS.

The tract at residues 1–401 (MPKRRDIETI…SLLKAVRSLE (401 aa)) is carboxyphosphate synthetic domain. R129, R169, G175, G176, R208, I210, E215, G241, I242, H243, Q284, and E298 together coordinate ATP. Residues 133–327 (RALMNELGEP…IAKLAAKIAV (195 aa)) form the ATP-grasp 1 domain. Mg(2+)-binding residues include Q284, E298, and N300. Mn(2+) contacts are provided by Q284, E298, and N300. Positions 402-546 (IGVHHLELNE…YSTYEEENES (145 aa)) are oligomerization domain. The interval 547–929 (IVTEKPSVIV…ALYKGLVASG (383 aa)) is carbamoyl phosphate synthetic domain. The ATP-grasp 2 domain occupies 671-861 (EQALSELGIP…MANLATKAIL (191 aa)). 10 residues coordinate ATP: R707, R746, I748, E752, G777, V778, H779, S780, Q820, and E832. 3 residues coordinate Mg(2+): Q820, E832, and N834. Mn(2+) is bound by residues Q820, E832, and N834. Positions 930–1065 (IHIQPHGAVL…TAMTEGLVRS (136 aa)) constitute an MGS-like domain. The allosteric domain stretch occupies residues 930–1065 (IHIQPHGAVL…TAMTEGLVRS (136 aa)).

Belongs to the CarB family. As to quaternary structure, composed of two chains; the small (or glutamine) chain promotes the hydrolysis of glutamine to ammonia, which is used by the large (or ammonia) chain to synthesize carbamoyl phosphate. Tetramer of heterodimers (alpha,beta)4. Mg(2+) serves as cofactor. It depends on Mn(2+) as a cofactor.

It catalyses the reaction hydrogencarbonate + L-glutamine + 2 ATP + H2O = carbamoyl phosphate + L-glutamate + 2 ADP + phosphate + 2 H(+). The catalysed reaction is hydrogencarbonate + NH4(+) + 2 ATP = carbamoyl phosphate + 2 ADP + phosphate + 2 H(+). Its pathway is amino-acid biosynthesis; L-arginine biosynthesis; carbamoyl phosphate from bicarbonate: step 1/1. The protein operates within pyrimidine metabolism; UMP biosynthesis via de novo pathway; (S)-dihydroorotate from bicarbonate: step 1/3. Its function is as follows. Large subunit of the glutamine-dependent carbamoyl phosphate synthetase (CPSase). CPSase catalyzes the formation of carbamoyl phosphate from the ammonia moiety of glutamine, carbonate, and phosphate donated by ATP, constituting the first step of 2 biosynthetic pathways, one leading to arginine and/or urea and the other to pyrimidine nucleotides. The large subunit (synthetase) binds the substrates ammonia (free or transferred from glutamine from the small subunit), hydrogencarbonate and ATP and carries out an ATP-coupled ligase reaction, activating hydrogencarbonate by forming carboxy phosphate which reacts with ammonia to form carbamoyl phosphate. In Bacillus caldolyticus, this protein is Carbamoyl phosphate synthase large chain.